We begin with the raw amino-acid sequence, 129 residues long: Small ribosomal subunit protein uS11 (129 aa).

It belongs to the universal ribosomal protein uS11 family. In terms of assembly, part of the 30S ribosomal subunit. Interacts with proteins S7 and S18. Binds to IF-3.

Located on the platform of the 30S subunit, it bridges several disparate RNA helices of the 16S rRNA. Forms part of the Shine-Dalgarno cleft in the 70S ribosome. The chain is Small ribosomal subunit protein uS11 from Pelotomaculum thermopropionicum (strain DSM 13744 / JCM 10971 / SI).